Reading from the N-terminus, the 378-residue chain is Chaperone protein DnaJ 2 (378 aa).

The J domain maps to 4–68; that stretch reads DYYGLLGVSR…EKRRIVDLGG (65 aa). The CR-type zinc-finger motif lies at 128 to 210; sequence GVTKQVTVDT…CVGDGRVRAR (83 aa). Zn(2+)-binding residues include Cys-141, Cys-144, Cys-158, Cys-161, Cys-184, Cys-187, Cys-198, and Cys-201. CXXCXGXG motif repeat units follow at residues 141-148, 158-165, 184-191, and 198-205; these read CDRCQGKG, CDTCGGRG, CPTCRGVG, and CCQCVGDG.

Belongs to the DnaJ family. In terms of assembly, homodimer. Zn(2+) is required as a cofactor.

Its subcellular location is the cytoplasm. In terms of biological role, participates actively in the response to hyperosmotic and heat shock by preventing the aggregation of stress-denatured proteins and by disaggregating proteins, also in an autonomous, DnaK-independent fashion. Unfolded proteins bind initially to DnaJ; upon interaction with the DnaJ-bound protein, DnaK hydrolyzes its bound ATP, resulting in the formation of a stable complex. GrpE releases ADP from DnaK; ATP binding to DnaK triggers the release of the substrate protein, thus completing the reaction cycle. Several rounds of ATP-dependent interactions between DnaJ, DnaK and GrpE are required for fully efficient folding. Also involved, together with DnaK and GrpE, in the DNA replication of plasmids through activation of initiation proteins. The protein is Chaperone protein DnaJ 2 of Mycobacterium leprae (strain TN).